Consider the following 247-residue polypeptide: Uridylate kinase (247 aa).

18–21 (KLSG) contributes to the ATP binding site. Glycine 60 serves as a coordination point for UMP. ATP contacts are provided by glycine 61 and arginine 65. Residues aspartate 80 and 141-148 (TGNPFFTT) each bind UMP. ATP-binding residues include threonine 168, tyrosine 174, and aspartate 177.

The protein belongs to the UMP kinase family. Homohexamer.

It localises to the cytoplasm. The catalysed reaction is UMP + ATP = UDP + ADP. The protein operates within pyrimidine metabolism; CTP biosynthesis via de novo pathway; UDP from UMP (UMPK route): step 1/1. With respect to regulation, inhibited by UTP. Functionally, catalyzes the reversible phosphorylation of UMP to UDP. This chain is Uridylate kinase, found in Ectopseudomonas mendocina (strain ymp) (Pseudomonas mendocina).